Here is a 705-residue protein sequence, read N- to C-terminus: Elongation factor G (705 aa).

The region spanning 8–290 (HRYRNIGIMA…GVIHLLPSPA (283 aa)) is the tr-type G domain. Residues 17 to 24 (AHIDAGKT), 88 to 92 (DTPGH), and 142 to 145 (NKMD) contribute to the GTP site.

The protein belongs to the TRAFAC class translation factor GTPase superfamily. Classic translation factor GTPase family. EF-G/EF-2 subfamily.

The protein resides in the cytoplasm. Catalyzes the GTP-dependent ribosomal translocation step during translation elongation. During this step, the ribosome changes from the pre-translocational (PRE) to the post-translocational (POST) state as the newly formed A-site-bound peptidyl-tRNA and P-site-bound deacylated tRNA move to the P and E sites, respectively. Catalyzes the coordinated movement of the two tRNA molecules, the mRNA and conformational changes in the ribosome. In Xylella fastidiosa (strain 9a5c), this protein is Elongation factor G.